The following is a 279-amino-acid chain: Ribose-phosphate pyrophosphokinase (279 aa).

ATP is bound by residues 31-33 (DGE) and 88-89 (RQ). Positions 121 and 159 each coordinate Mg(2+). Residue Lys182 is part of the active site. D-ribose 5-phosphate is bound by residues Arg184, Asp208, and 212–216 (STGGT).

This sequence belongs to the ribose-phosphate pyrophosphokinase family. Class III (archaeal) subfamily. Requires Mg(2+) as cofactor.

It localises to the cytoplasm. The enzyme catalyses D-ribose 5-phosphate + ATP = 5-phospho-alpha-D-ribose 1-diphosphate + AMP + H(+). It functions in the pathway metabolic intermediate biosynthesis; 5-phospho-alpha-D-ribose 1-diphosphate biosynthesis; 5-phospho-alpha-D-ribose 1-diphosphate from D-ribose 5-phosphate (route I): step 1/1. Involved in the biosynthesis of the central metabolite phospho-alpha-D-ribosyl-1-pyrophosphate (PRPP) via the transfer of pyrophosphoryl group from ATP to 1-hydroxyl of ribose-5-phosphate (Rib-5-P). This is Ribose-phosphate pyrophosphokinase from Pyrococcus furiosus (strain ATCC 43587 / DSM 3638 / JCM 8422 / Vc1).